Reading from the N-terminus, the 336-residue chain is Ketol-acid reductoisomerase (NADP(+)) (336 aa).

In terms of domain architecture, KARI N-terminal Rossmann spans 5-185; that stretch reads SKIYTDKDSN…GATRAGVIPT (181 aa). NADP(+) is bound by residues 28–31, serine 56, and 86–89; these read YGSQ and DMVQ. Residue histidine 111 is part of the active site. Glycine 137 is an NADP(+) binding site. Positions 186–331 constitute a KARI C-terminal knotted domain; that stretch reads TFKEETETDL…NQLKDLIQKG (146 aa). Mg(2+) contacts are provided by aspartate 194, glutamate 198, glutamate 230, and glutamate 234. Serine 255 contacts substrate.

The protein belongs to the ketol-acid reductoisomerase family. Requires Mg(2+) as cofactor.

The catalysed reaction is (2R)-2,3-dihydroxy-3-methylbutanoate + NADP(+) = (2S)-2-acetolactate + NADPH + H(+). It carries out the reaction (2R,3R)-2,3-dihydroxy-3-methylpentanoate + NADP(+) = (S)-2-ethyl-2-hydroxy-3-oxobutanoate + NADPH + H(+). It participates in amino-acid biosynthesis; L-isoleucine biosynthesis; L-isoleucine from 2-oxobutanoate: step 2/4. Its pathway is amino-acid biosynthesis; L-valine biosynthesis; L-valine from pyruvate: step 2/4. Involved in the biosynthesis of branched-chain amino acids (BCAA). Catalyzes an alkyl-migration followed by a ketol-acid reduction of (S)-2-acetolactate (S2AL) to yield (R)-2,3-dihydroxy-isovalerate. In the isomerase reaction, S2AL is rearranged via a Mg-dependent methyl migration to produce 3-hydroxy-3-methyl-2-ketobutyrate (HMKB). In the reductase reaction, this 2-ketoacid undergoes a metal-dependent reduction by NADPH to yield (R)-2,3-dihydroxy-isovalerate. In Saccharolobus islandicus (strain Y.N.15.51 / Yellowstone #2) (Sulfolobus islandicus), this protein is Ketol-acid reductoisomerase (NADP(+)).